The primary structure comprises 169 residues: Myosin regulatory light chain 2, skeletal muscle isoform A (169 aa).

S21 carries the post-translational modification Phosphoserine. EF-hand domains lie at 26–61 (SQIQEYKEAFTIIDQNRDGIISKDDLRDVLASMGQL), 96–131 (DPEDVIVSAFKVLDPEGTGSIKKEFLEELLTTQCDR), and 132–167 (FTAEEMKNLWAAFPPDVAGNVDYKNICYVITHGEEK). Ca(2+) is bound by residues D39, N41, D43, and D50.

As to quaternary structure, myosin is a hexamer of 2 heavy chains and 4 light chains. Interacts with nanos3; the interaction negatively regulates mylpfa phosphorylation.

Its function is as follows. Myosin regulatory subunit that plays a role to maintain muscle integrity during early development. Plays a role in muscle contraction. This Danio rerio (Zebrafish) protein is Myosin regulatory light chain 2, skeletal muscle isoform A (mylpfa).